The primary structure comprises 414 residues: Serine hydroxymethyltransferase (414 aa).

(6S)-5,6,7,8-tetrahydrofolate-binding positions include Leu121 and 125-127; that span reads GHL. Lys229 is modified (N6-(pyridoxal phosphate)lysine).

Belongs to the SHMT family. In terms of assembly, homodimer. The cofactor is pyridoxal 5'-phosphate.

The protein resides in the cytoplasm. It catalyses the reaction (6R)-5,10-methylene-5,6,7,8-tetrahydrofolate + glycine + H2O = (6S)-5,6,7,8-tetrahydrofolate + L-serine. It participates in one-carbon metabolism; tetrahydrofolate interconversion. Its pathway is amino-acid biosynthesis; glycine biosynthesis; glycine from L-serine: step 1/1. Catalyzes the reversible interconversion of serine and glycine with tetrahydrofolate (THF) serving as the one-carbon carrier. This reaction serves as the major source of one-carbon groups required for the biosynthesis of purines, thymidylate, methionine, and other important biomolecules. Also exhibits THF-independent aldolase activity toward beta-hydroxyamino acids, producing glycine and aldehydes, via a retro-aldol mechanism. The polypeptide is Serine hydroxymethyltransferase (Polaromonas naphthalenivorans (strain CJ2)).